We begin with the raw amino-acid sequence, 365 residues long: 2'-hydroxybiphenyl-2-sulfinate desulfinase (365 aa).

Cys27 is an active-site residue. 2'-hydroxybiphenyl-2-sulfinate contacts are provided by Cys27, His60, and Arg70. Residue Arg70 is part of the active site.

The protein belongs to the DszB desulfinase family. In terms of assembly, monomer.

Its subcellular location is the cytoplasm. It catalyses the reaction 2'-hydroxybiphenyl-2-sulfinate + H2O = biphenyl-2-ol + sulfite + H(+). It participates in sulfur metabolism; dibenzothiophene degradation. Functionally, catalyzes the third and final step of the '4S' desulfurization pathway that removes covalently bound sulfur from dibenzothiophene (DBT) without breaking carbon-carbon bonds. Oxidizes 2-(2'-hydroxyphenyl)benzene sulphinate (HBPS) to 2-hydroxybiphenyl (HBP) plus sulfite. The rate-limiting step of the '4S' desulfurization pathway. The sequence is that of 2'-hydroxybiphenyl-2-sulfinate desulfinase from Rhodococcus erythropolis (Arthrobacter picolinophilus).